The sequence spans 330 residues: CRISPR-associated endonuclease Cas1 (330 aa).

3 residues coordinate Mn(2+): Glu154, His222, and Glu237.

This sequence belongs to the CRISPR-associated endonuclease Cas1 family. Homodimer, forms a heterotetramer with a Cas2 homodimer. Requires Mg(2+) as cofactor. The cofactor is Mn(2+).

Functionally, CRISPR (clustered regularly interspaced short palindromic repeat), is an adaptive immune system that provides protection against mobile genetic elements (viruses, transposable elements and conjugative plasmids). CRISPR clusters contain spacers, sequences complementary to antecedent mobile elements, and target invading nucleic acids. CRISPR clusters are transcribed and processed into CRISPR RNA (crRNA). Acts as a dsDNA endonuclease. Involved in the integration of spacer DNA into the CRISPR cassette. The chain is CRISPR-associated endonuclease Cas1 from Clostridium perfringens (strain SM101 / Type A).